Reading from the N-terminus, the 209-residue chain is Small ribosomal subunit protein uS4 (209 aa).

The S4 RNA-binding domain maps to 99 to 162 (RRLDNMVYRL…RKNNKIIEAM (64 aa)).

It belongs to the universal ribosomal protein uS4 family. Part of the 30S ribosomal subunit. Contacts protein S5. The interaction surface between S4 and S5 is involved in control of translational fidelity.

Its function is as follows. One of the primary rRNA binding proteins, it binds directly to 16S rRNA where it nucleates assembly of the body of the 30S subunit. With S5 and S12 plays an important role in translational accuracy. In Syntrophus aciditrophicus (strain SB), this protein is Small ribosomal subunit protein uS4.